The primary structure comprises 265 residues: Methyl-coenzyme M reductase II subunit gamma (265 aa).

Arg123 contacts coenzyme M.

It belongs to the methyl-coenzyme M reductase gamma subunit family. In terms of assembly, MCR is a hexamer of two alpha, two beta, and two gamma chains, forming a dimer of heterotrimers. The cofactor is coenzyme F430.

It carries out the reaction coenzyme B + methyl-coenzyme M = methane + coenzyme M-coenzyme B heterodisulfide. Its pathway is one-carbon metabolism; methyl-coenzyme M reduction; methane from methyl-coenzyme M: step 1/1. In terms of biological role, component of the methyl-coenzyme M reductase (MCR) I that catalyzes the reductive cleavage of methyl-coenzyme M (CoM-S-CH3 or 2-(methylthio)ethanesulfonate) using coenzyme B (CoB or 7-mercaptoheptanoylthreonine phosphate) as reductant which results in the production of methane and the mixed heterodisulfide of CoB and CoM (CoM-S-S-CoB). This is the final step in methanogenesis. The protein is Methyl-coenzyme M reductase II subunit gamma (mrtG) of Methanothermobacter thermautotrophicus (strain ATCC 29096 / DSM 1053 / JCM 10044 / NBRC 100330 / Delta H) (Methanobacterium thermoautotrophicum).